Reading from the N-terminus, the 294-residue chain is Survival motor neuron protein (294 aa).

Residues 1-12 (MAMSSGGSGGGV) show a composition bias toward gly residues. Positions 1–32 (MAMSSGGSGGGVPEQEDSVLFRRGTGQSDDSD) are disordered. Alanine 2 bears the N-acetylalanine mark. Serine 4, serine 5, and serine 8 each carry phosphoserine; by PKA. The interval 13-44 (PEQEDSVLFRRGTGQSDDSDIWDDTALIKAYD) is P1 (binding site for GEMIN2). Threonine 25 is subject to Phosphothreonine. Phosphoserine occurs at positions 28 and 31. Lysine 51 participates in a covalent cross-link: Glycyl lysine isopeptide (Lys-Gly) (interchain with G-Cter in SUMO2). The interval 58–88 (DICETSGKPKTTPKRKPAKKNKSQKKNTAAP) is disordered. Residues 68 to 82 (TTPKRKPAKKNKSQK) show a composition bias toward basic residues. At threonine 69 the chain carries Phosphothreonine. At threonine 85 the chain carries Phosphothreonine; by PKA. The region spanning 91-151 (QWKVGDKCSA…LSPISEVANN (61 aa)) is the Tudor domain. Residues 97–209 (KCSAIWSEDG…MPGPRLGPGK (113 aa)) form a required for interaction with RPP20/POP7 region. Over residues 156–166 (AQENENESQVS) the composition is skewed to low complexity. The segment at 156–222 (AQENENESQV…KFNGPPPPPP (67 aa)) is disordered. At serine 187 the chain carries Phosphoserine; by PKA. The segment covering 194-204 (LPPPPPMPGPR) has biased composition (pro residues). Lysine 209 participates in a covalent cross-link: Glycyl lysine isopeptide (Lys-Gly) (interchain with G-Cter in SUMO2). The tract at residues 240–267 (PPIIPPPPPICPDSLDDADALGSMLISW) is P2 (binding site for SM B). The required for interaction with SYNCRIP stretch occupies residues 279 to 294 (GFRQNQKEGRCSHSLN).

The protein belongs to the SMN family. As to quaternary structure, homooligomer; may form higher order homooligomers in the dimer to octamer range. Part of the core SMN complex that contains SMN1, GEMIN2/SIP1, DDX20/GEMIN3, GEMIN4, GEMIN5, GEMIN6, GEMIN7, GEMIN8 and STRAP/UNRIP. Part of the SMN-Sm complex that contains SMN1, GEMIN2/SIP1, DDX20/GEMIN3, GEMIN4, GEMIN5, GEMIN6, GEMIN7, GEMIN8, STRAP/UNRIP and the Sm proteins SNRPB, SNRPD1, SNRPD2, SNRPD3, SNRPE, SNRPF and SNRPG. Component of an import snRNP complex composed of KPNB1, RNUT1, SMN1 and ZNF259. Interacts with DDX20, FBL, NOLA1, RNUT1, SYNCRIP and with several spliceosomal snRNP core Sm proteins, including SNRPB, SNRPD1, SNRPD2, SNRPD3, SNRPE and ILF3. Interacts with GEMIN2; the interaction is direct. Interacts with GEMIN3; the interaction is direct. Interacts with GEMIN8; the interaction is direct. Interacts with SNRPB; the interaction is direct. Interacts (via Tudor domain) with SNRPD1 (via C-terminus); the interaction is direct. Interacts with SNRPD2; the interaction is direct. Interacts (via Tudor domain) with SNRPD3 (via C-terminus); the interaction is direct. Interacts with SNRPE; the interaction is direct. Interacts with OSTF1, LSM10, LSM11 and RPP20/POP7. Interacts (via C-terminal region) with ZPR1 (via C-terminal region). Interacts (via Tudor domain) with COIL. Interacts with SETX; recruits SETX to POLR2A. Interacts with POLR2A (via the C-terminal domain (CTD)). Interacts with PRMT5. Interacts with XRN2. Interacts (via C-terminus) with FMR1 (via C-terminus); the interaction is direct and occurs in a RNA-independent manner. Interacts (via Tudor domain) with SF3B2 ('Arg-508'-methylated form). Interacts with WRAP53/TCAB1. Interacts (via Tudor domain) with ELAVL4 in an RNA-independent manner; the interaction is required for localization of ELAVL4 to RNA granules. Interacts with FRG1.

The protein localises to the nucleus. It is found in the gem. Its subcellular location is the cajal body. The protein resides in the cytoplasm. It localises to the cytoplasmic granule. The protein localises to the perikaryon. It is found in the cell projection. Its subcellular location is the neuron projection. The protein resides in the axon. It localises to the myofibril. The protein localises to the sarcomere. It is found in the z line. In terms of biological role, the SMN complex catalyzes the assembly of small nuclear ribonucleoproteins (snRNPs), the building blocks of the spliceosome, and thereby plays an important role in the splicing of cellular pre-mRNAs. Most spliceosomal snRNPs contain a common set of Sm proteins SNRPB, SNRPD1, SNRPD2, SNRPD3, SNRPE, SNRPF and SNRPG that assemble in a heptameric protein ring on the Sm site of the small nuclear RNA to form the core snRNP (Sm core). In the cytosol, the Sm proteins SNRPD1, SNRPD2, SNRPE, SNRPF and SNRPG are trapped in an inactive 6S pICln-Sm complex by the chaperone CLNS1A that controls the assembly of the core snRNP. To assemble core snRNPs, the SMN complex accepts the trapped 5Sm proteins from CLNS1A forming an intermediate. Binding of snRNA inside 5Sm ultimately triggers eviction of the SMN complex, thereby allowing binding of SNRPD3 and SNRPB to complete assembly of the core snRNP. Within the SMN complex, SMN1 acts as a structural backbone and together with GEMIN2 it gathers the Sm complex subunits. Ensures the correct splicing of U12 intron-containing genes that may be important for normal motor and proprioceptive neurons development. Also required for resolving RNA-DNA hybrids created by RNA polymerase II, that form R-loop in transcription terminal regions, an important step in proper transcription termination. May also play a role in the metabolism of small nucleolar ribonucleoprotein (snoRNPs). The protein is Survival motor neuron protein (SMN1) of Macaca fascicularis (Crab-eating macaque).